The chain runs to 225 residues: Deoxyribose-phosphate aldolase (225 aa).

The active-site Proton donor/acceptor is the Asp-94. The active-site Schiff-base intermediate with acetaldehyde is Lys-158. The Proton donor/acceptor role is filled by Lys-187.

It belongs to the DeoC/FbaB aldolase family. DeoC type 1 subfamily.

The protein localises to the cytoplasm. It carries out the reaction 2-deoxy-D-ribose 5-phosphate = D-glyceraldehyde 3-phosphate + acetaldehyde. Its pathway is carbohydrate degradation; 2-deoxy-D-ribose 1-phosphate degradation; D-glyceraldehyde 3-phosphate and acetaldehyde from 2-deoxy-alpha-D-ribose 1-phosphate: step 2/2. Functionally, catalyzes a reversible aldol reaction between acetaldehyde and D-glyceraldehyde 3-phosphate to generate 2-deoxy-D-ribose 5-phosphate. The polypeptide is Deoxyribose-phosphate aldolase (Thermococcus gammatolerans (strain DSM 15229 / JCM 11827 / EJ3)).